A 29-amino-acid polypeptide reads, in one-letter code: Toxin TdII-3 (29 aa).

The LCN-type CS-alpha/beta domain maps to Lys-1–Leu-29.

This sequence belongs to the long (4 C-C) scorpion toxin superfamily. Sodium channel inhibitor family. Beta subfamily. In terms of tissue distribution, expressed by the venom gland.

The protein resides in the secreted. Binds voltage-independently to sodium channels (Nav) and shifts the voltage of activation toward more negative potentials. This toxin is active against mammals and also affects neuromuscular preparations of frog. This Tityus discrepans (Venezuelan scorpion) protein is Toxin TdII-3.